The chain runs to 408 residues: Histidine--tRNA ligase (408 aa).

It belongs to the class-II aminoacyl-tRNA synthetase family. As to quaternary structure, homodimer.

It localises to the cytoplasm. The enzyme catalyses tRNA(His) + L-histidine + ATP = L-histidyl-tRNA(His) + AMP + diphosphate + H(+). The protein is Histidine--tRNA ligase of Campylobacter concisus (strain 13826).